Consider the following 354-residue polypeptide: Galactoside alpha-(1,2)-fucosyltransferase 2 (354 aa).

Over methionine 1–glutamine 5 the chain is Cytoplasmic. The chain crosses the membrane as a helical; Signal-anchor for type II membrane protein span at residues valine 6 to threonine 26. Residues histidine 27–histidine 354 are Lumenal-facing. The tract at residues leucine 43–asparagine 68 is disordered. The segment covering methionine 45 to serine 56 has biased composition (polar residues). A compositionally biased stretch (basic and acidic residues) spans proline 57–asparagine 68. N-linked (GlcNAc...) asparagine glycosylation is present at asparagine 199.

It belongs to the glycosyltransferase 11 family. In terms of tissue distribution, specifically expressed in gut.

It localises to the golgi apparatus. The protein localises to the golgi stack membrane. It catalyses the reaction a beta-D-galactosyl-(1-&gt;3)-N-acetyl-beta-D-glucosaminyl derivative + GDP-beta-L-fucose = an alpha-L-Fuc-(1-&gt;2)-beta-D-Gal-(1-&gt;3)-beta-D-GlcNAc derivative + GDP + H(+). The catalysed reaction is a beta-D-galactosyl-(1-&gt;4)-N-acetyl-beta-D-glucosaminyl derivative + GDP-beta-L-fucose = an alpha-L-Fuc-(1-&gt;2)-beta-D-Gal-(1-&gt;4)-beta-D-GlcNAc derivative + GDP + H(+). It carries out the reaction a ganglioside GM1 (d18:1(4E)) + GDP-beta-L-fucose = a ganglioside Fuc-GM1 (d18:1(4E)) + GDP + H(+). The enzyme catalyses a globoside GalGb4Cer (d18:1(4E)) + GDP-beta-L-fucose = a globoside Globo-H (d18:1(4E)) + GDP + H(+). It catalyses the reaction a neolactoside nLc4Cer + GDP-beta-L-fucose = a neolactoside IV(2)-alpha-Fuc-nLc4Cer + GDP + H(+). The catalysed reaction is a neolactoside nLc4Cer(d18:1(4E)) + GDP-beta-L-fucose = a neolactoside IV(2)-alpha-Fuc-nLc4Cer(d18:1(4E)) + GDP + H(+). It carries out the reaction a ganglioside GM1 + GDP-beta-L-fucose = a ganglioside Fuc-GM1 + GDP + H(+). The enzyme catalyses a ganglioside GA1 + GDP-beta-L-fucose = a ganglioside Fuc-GA1 + GDP + H(+). It catalyses the reaction Lc4Cer + GDP-beta-L-fucose = alpha-L-fucosyl-(1-&gt;2)-beta-D-galactosyl-(1-&gt;3)-N-acetyl-beta-D-glucosaminyl-(1-&gt;3)-beta-D-galactosyl-(1-&gt;4)-beta-D-glucosyl-(1&lt;-&gt;1')-ceramide + GDP + H(+). The catalysed reaction is a beta-D-Gal-(1-&gt;3)-beta-D-GlcNAc-(1-&gt;3)-beta-D-Gal-(1-&gt;4)-beta-D-Glc-(1&lt;-&gt;1')-Cer(d18:1(4E)) + GDP-beta-L-fucose = alpha-L-fucosyl-(1-&gt;2)- beta-D-galactosyl-(1-&gt;3)-N-acetyl-beta-D-glucosaminyl-(1-&gt;3)-beta-D-galactosyl-(1-&gt;4)-beta-D-glucosyl-(1&lt;-&gt;1')-N-acylsphing-4-enine + GDP + H(+). It carries out the reaction a ganglioside GD1b + GDP-beta-L-fucose = a ganglioside Fuc-GD1b + GDP + H(+). The enzyme catalyses a lactoside III(4)-a-Fuc-Lc4Cer + GDP-beta-L-fucose = a lactoside IV(2),III(4)-a-[Fuc]2-Lc4Cer + GDP + H(+). It catalyses the reaction beta-D-galactosyl-(1-&gt;3)-N-acetyl-D-galactosamine + GDP-beta-L-fucose = alpha-L-fucosyl-(1-&gt;2)-beta-D-galactosyl-(1-&gt;3)-N-acetyl-D-galactosamine + GDP + H(+). The protein operates within protein modification; protein glycosylation. Catalyzes the transfer of L-fucose, from a guanosine diphosphate-beta-L-fucose, to the terminal galactose on both O- and N-linked glycans chains of cell surface glycoproteins and glycolipids and the resulting epitope regulates several processes such as cell-cell interaction including host-microbe interaction, cell surface expression and cell proliferation. Preferentially fucosylates gangliosides GA1 and GM1 in the antrum, cecum and colon and in the female reproductive organs. Fucosylated host glycoproteins or glycolipids mediate interaction with intestinal microbiota influencing its composition. Creates a soluble precursor oligosaccharide FuC-alpha ((1,2)Galbeta-) called the H antigen which is an essential substrate for the final step in the soluble ABO blood group antigen synthesis pathway. The polypeptide is Galactoside alpha-(1,2)-fucosyltransferase 2 (Rattus norvegicus (Rat)).